We begin with the raw amino-acid sequence, 286 residues long: Bifunctional protein FolD (286 aa).

NADP(+) is bound by residues 165-167, Ser190, and Val231; that span reads GRS.

Belongs to the tetrahydrofolate dehydrogenase/cyclohydrolase family. As to quaternary structure, homodimer.

It catalyses the reaction (6R)-5,10-methylene-5,6,7,8-tetrahydrofolate + NADP(+) = (6R)-5,10-methenyltetrahydrofolate + NADPH. The enzyme catalyses (6R)-5,10-methenyltetrahydrofolate + H2O = (6R)-10-formyltetrahydrofolate + H(+). Its pathway is one-carbon metabolism; tetrahydrofolate interconversion. Functionally, catalyzes the oxidation of 5,10-methylenetetrahydrofolate to 5,10-methenyltetrahydrofolate and then the hydrolysis of 5,10-methenyltetrahydrofolate to 10-formyltetrahydrofolate. The sequence is that of Bifunctional protein FolD from Bacillus cereus (strain ZK / E33L).